Reading from the N-terminus, the 520-residue chain is Biotinidase (520 aa).

The first 21 residues, 1–21 (MSGARTAPALFFLGCSALALG), serve as a signal peptide directing secretion. The CN hydrolase domain occupies 49–333 (NPLELVSRQE…TGNTTSEMDP (285 aa)). Catalysis depends on Glu89, which acts as the Proton acceptor. 3 N-linked (GlcNAc...) asparagine glycosylation sites follow: Asn96, Asn127, and Asn180. The Proton donor role is filled by Lys189. The Nucleophile role is filled by Cys222. 3 N-linked (GlcNAc...) asparagine glycosylation sites follow: Asn326, Asn379, and Asn466.

It belongs to the carbon-nitrogen hydrolase superfamily. BTD/VNN family.

The protein resides in the secreted. Its subcellular location is the extracellular space. It carries out the reaction biocytin + H2O = biotin + L-lysine. The enzyme catalyses biotin amide + H2O = biotin + NH4(+). Functionally, catalytic release of biotin from biocytin, the product of biotin-dependent carboxylases degradation. The protein is Biotinidase (Btd) of Mus musculus (Mouse).